A 716-amino-acid polypeptide reads, in one-letter code: Putative proline--tRNA ligase C19C7.06 (716 aa).

The segment at 655–675 is disordered; the sequence is KNSARQVNGDEPEDEKAPSMG.

Belongs to the class-II aminoacyl-tRNA synthetase family.

It is found in the cytoplasm. It carries out the reaction tRNA(Pro) + L-proline + ATP = L-prolyl-tRNA(Pro) + AMP + diphosphate. This is Putative proline--tRNA ligase C19C7.06 (prs1) from Schizosaccharomyces pombe (strain 972 / ATCC 24843) (Fission yeast).